The following is a 138-amino-acid chain: Flagellar basal body rod protein FlgB (138 aa).

The protein belongs to the flagella basal body rod proteins family. In terms of assembly, the basal body constitutes a major portion of the flagellar organelle and consists of a number of rings mounted on a central rod. In Gram-negative bacteria, at least four rings, L, P, S and M are present, whereas Gram-positive bacteria lack the L and P rings. The rod consists of about 26 subunits of FlgG in the distal portion, and FlgB, FlgC and FlgF build up the proximal portion of the rod with about 6 subunits each. Rod assembly occurs by export via the flagellum-specific pathway of its constituent proteins and by their incorporation into the rod structure in the probable order of FlgB, FlgC, FlgF and FlgG. Another protein, FliE, also assembles onto the stable rod structure.

It localises to the bacterial flagellum basal body. Functionally, structural component of flagellum, the bacterial motility apparatus. Part of the rod structure of flagellar basal body. In Escherichia coli (strain K12), this protein is Flagellar basal body rod protein FlgB (flgB).